The sequence spans 546 residues: CTP synthase (546 aa).

The tract at residues 1 to 267 (MTKFIFVTGG…AEQVLDILQL (267 aa)) is amidoligase domain. CTP is bound at residue Ser13. Ser13 contacts UTP. 14–19 (SIGKGI) is an ATP binding site. Tyr54 is an L-glutamine binding site. Residue Asp71 coordinates ATP. Asp71 and Glu141 together coordinate Mg(2+). Residues 148 to 150 (DIE), 188 to 193 (KTKPTQ), and Lys224 each bind CTP. UTP contacts are provided by residues 188 to 193 (KTKPTQ) and Lys224. The region spanning 292–534 (EVAIVGKYVR…IKAALGSDLT (243 aa)) is the Glutamine amidotransferase type-1 domain. Residue Gly354 participates in L-glutamine binding. Catalysis depends on Cys381, which acts as the Nucleophile; for glutamine hydrolysis. L-glutamine-binding positions include 382-385 (LGMQ), Glu405, and Arg462. Catalysis depends on residues His507 and Glu509.

This sequence belongs to the CTP synthase family. In terms of assembly, homotetramer.

It carries out the reaction UTP + L-glutamine + ATP + H2O = CTP + L-glutamate + ADP + phosphate + 2 H(+). It catalyses the reaction L-glutamine + H2O = L-glutamate + NH4(+). The enzyme catalyses UTP + NH4(+) + ATP = CTP + ADP + phosphate + 2 H(+). Its pathway is pyrimidine metabolism; CTP biosynthesis via de novo pathway; CTP from UDP: step 2/2. With respect to regulation, allosterically activated by GTP, when glutamine is the substrate; GTP has no effect on the reaction when ammonia is the substrate. The allosteric effector GTP functions by stabilizing the protein conformation that binds the tetrahedral intermediate(s) formed during glutamine hydrolysis. Inhibited by the product CTP, via allosteric rather than competitive inhibition. Functionally, catalyzes the ATP-dependent amination of UTP to CTP with either L-glutamine or ammonia as the source of nitrogen. Regulates intracellular CTP levels through interactions with the four ribonucleotide triphosphates. The polypeptide is CTP synthase (Synechococcus sp. (strain ATCC 27144 / PCC 6301 / SAUG 1402/1) (Anacystis nidulans)).